The primary structure comprises 459 residues: Jacalin-related lectin 12 (459 aa).

Jacalin-type lectin domains are found at residues 2 to 148, 151 to 296, and 298 to 443; these read SQDS…YFTP, PTRM…YITT, and TLTK…YSFP.

The protein belongs to the jacalin lectin family.

The polypeptide is Jacalin-related lectin 12 (JAL12) (Arabidopsis thaliana (Mouse-ear cress)).